A 248-amino-acid polypeptide reads, in one-letter code: Tetrachloro-P-hydroquinone reductive dehalogenase (248 aa).

Positions 2-84 (PEVSLYNYTM…EAAKLGKVGI (83 aa)) constitute a GST N-terminal domain. The GST C-terminal domain occupies 133-248 (YAEKYPELRS…RVMPNWKGGI (116 aa)).

The protein belongs to the GST superfamily. Homodimer.

The enzyme catalyses 2,6-dichlorohydroquinone + glutathione disulfide + chloride + H(+) = 2,3,6-trichlorohydroquinone + 2 glutathione. It carries out the reaction 2,3,6-trichlorohydroquinone + glutathione disulfide + chloride = 2,3,5,6-tetrachlorohydroquinone + 2 glutathione. The protein operates within xenobiotic degradation; pentachlorophenol degradation. Its function is as follows. Sequential reduction of tetrachloro-p-hydroquinone to monochlorophenol, using glutathione as the reducing agent. The protein is Tetrachloro-P-hydroquinone reductive dehalogenase (pcpC) of Sphingobium chlorophenolicum.